The chain runs to 332 residues: Fructose-bisphosphate aldolase (332 aa).

A D-glyceraldehyde 3-phosphate-binding site is contributed by S56. D93 acts as the Proton donor in catalysis. H94, D115, E147, and H191 together coordinate Zn(2+). G192 contacts dihydroxyacetone phosphate. Position 234 (H234) interacts with Zn(2+). Dihydroxyacetone phosphate-binding positions include 235–237 (GAS) and 277–280 (NIDS).

This sequence belongs to the class II fructose-bisphosphate aldolase family. Homodimer. The cofactor is Zn(2+).

It catalyses the reaction beta-D-fructose 1,6-bisphosphate = D-glyceraldehyde 3-phosphate + dihydroxyacetone phosphate. The protein operates within carbohydrate degradation; glycolysis; D-glyceraldehyde 3-phosphate and glycerone phosphate from D-glucose: step 4/4. Catalyzes the aldol condensation of dihydroxyacetone phosphate (DHAP or glycerone-phosphate) with glyceraldehyde 3-phosphate (G3P) to form fructose 1,6-bisphosphate (FBP) in gluconeogenesis and the reverse reaction in glycolysis. This is Fructose-bisphosphate aldolase (fba) from Treponema pallidum (strain Nichols).